We begin with the raw amino-acid sequence, 165 residues long: Protein NKG7 (165 aa).

4 helical membrane-spanning segments follow: residues 9 to 29, 61 to 81, 92 to 112, and 133 to 153; these read LLTSSLGLVSLLVAVSTNFWF, FCILAVLWGLISTAFLVMSCI, IVSTFMGFAGALSLIVAMTVY, and FYLGWVSTLLFLCTGGLSLGA.

The protein belongs to the PMP-22/EMP/MP20 family.

It is found in the cell membrane. The protein localises to the cytolytic granule membrane. Regulates cytotoxic granule exocytosis in effector lymphocytes, thus acting as a critical mediator of inflammation in a broad range of infectious and non-infectious diseases. Essential for cytotoxic degranulation of natural killer (NK) cells and CD8(+) T-cells and for the activation of CD4(+) T-cells following infection. Plays a critical role in CD8(+) T-cell and NK cell-mediated cytolysis of target cells and contributes to the cytolytic activity via the perforin/granzyme pathway by enhancing exocytosis of LAMP1-carrying lytic granules. Contributes to NK cell-mediated control of cancer metastasis. This is Protein NKG7 (NKG7) from Bos taurus (Bovine).